Reading from the N-terminus, the 158-residue chain is Antitoxin TacA (158 aa).

It belongs to the TacA antitoxin family. In terms of assembly, forms a complex with cognate toxin TacT.

In terms of biological role, antitoxin component of a type II toxin-antitoxin (TA) system. Counteracts the toxic effect of cognate toxin TacT. TacA-TacT both represses and derepresses expression of its own operon. This is Antitoxin TacA from Mycobacterium tuberculosis (strain ATCC 25618 / H37Rv).